The following is a 107-amino-acid chain: Phosphoribosyl-ATP pyrophosphatase (107 aa).

This sequence belongs to the PRA-PH family.

Its subcellular location is the cytoplasm. It catalyses the reaction 1-(5-phospho-beta-D-ribosyl)-ATP + H2O = 1-(5-phospho-beta-D-ribosyl)-5'-AMP + diphosphate + H(+). It functions in the pathway amino-acid biosynthesis; L-histidine biosynthesis; L-histidine from 5-phospho-alpha-D-ribose 1-diphosphate: step 2/9. The polypeptide is Phosphoribosyl-ATP pyrophosphatase (Bacillus cereus (strain ATCC 14579 / DSM 31 / CCUG 7414 / JCM 2152 / NBRC 15305 / NCIMB 9373 / NCTC 2599 / NRRL B-3711)).